A 62-amino-acid polypeptide reads, in one-letter code: Large ribosomal subunit protein bL28 (62 aa).

The protein belongs to the bacterial ribosomal protein bL28 family.

The chain is Large ribosomal subunit protein bL28 from Acetivibrio thermocellus (strain ATCC 27405 / DSM 1237 / JCM 9322 / NBRC 103400 / NCIMB 10682 / NRRL B-4536 / VPI 7372) (Clostridium thermocellum).